The primary structure comprises 459 residues: UDP-N-acetylmuramoylalanine--D-glutamate ligase (459 aa).

ATP is bound at residue 120–126 (GSNGKTT).

It belongs to the MurCDEF family.

It localises to the cytoplasm. The enzyme catalyses UDP-N-acetyl-alpha-D-muramoyl-L-alanine + D-glutamate + ATP = UDP-N-acetyl-alpha-D-muramoyl-L-alanyl-D-glutamate + ADP + phosphate + H(+). Its pathway is cell wall biogenesis; peptidoglycan biosynthesis. Its function is as follows. Cell wall formation. Catalyzes the addition of glutamate to the nucleotide precursor UDP-N-acetylmuramoyl-L-alanine (UMA). In Lactobacillus helveticus (strain DPC 4571), this protein is UDP-N-acetylmuramoylalanine--D-glutamate ligase.